Consider the following 135-residue polypeptide: Ribosome-binding factor A (135 aa).

The disordered stretch occupies residues 115-135; sequence VNEDKRKQQDSGREEDQAGEE. A compositionally biased stretch (basic and acidic residues) spans 116–135; sequence NEDKRKQQDSGREEDQAGEE.

It belongs to the RbfA family. Monomer. Binds 30S ribosomal subunits, but not 50S ribosomal subunits or 70S ribosomes.

Its subcellular location is the cytoplasm. Its function is as follows. One of several proteins that assist in the late maturation steps of the functional core of the 30S ribosomal subunit. Associates with free 30S ribosomal subunits (but not with 30S subunits that are part of 70S ribosomes or polysomes). Required for efficient processing of 16S rRNA. May interact with the 5'-terminal helix region of 16S rRNA. The protein is Ribosome-binding factor A of Vibrio campbellii (strain ATCC BAA-1116).